The chain runs to 482 residues: Membrane-bound lytic murein transglycosylase F (482 aa).

A signal peptide spans 1-18 (MKGLFIRIVLAICLSLWA). Residues 19–266 (IDMVFPWQQI…RIEEKYFNHL (248 aa)) are non-LT domain. Residues 267–482 (NQFDYVDTRS…ISTQTQQEQR (216 aa)) form an LT domain region. Glu-311 is an active-site residue.

In the N-terminal section; belongs to the bacterial solute-binding protein 3 family. It in the C-terminal section; belongs to the transglycosylase Slt family.

The protein resides in the cell outer membrane. It carries out the reaction Exolytic cleavage of the (1-&gt;4)-beta-glycosidic linkage between N-acetylmuramic acid (MurNAc) and N-acetylglucosamine (GlcNAc) residues in peptidoglycan, from either the reducing or the non-reducing ends of the peptidoglycan chains, with concomitant formation of a 1,6-anhydrobond in the MurNAc residue.. Functionally, murein-degrading enzyme that degrades murein glycan strands and insoluble, high-molecular weight murein sacculi, with the concomitant formation of a 1,6-anhydromuramoyl product. Lytic transglycosylases (LTs) play an integral role in the metabolism of the peptidoglycan (PG) sacculus. Their lytic action creates space within the PG sacculus to allow for its expansion as well as for the insertion of various structures such as secretion systems and flagella. The chain is Membrane-bound lytic murein transglycosylase F from Histophilus somni (strain 129Pt) (Haemophilus somnus).